A 415-amino-acid chain; its full sequence is Corticotropin-releasing factor receptor 1 (415 aa).

Residues 1 to 23 (MGRRPQLRLVKALLLLGLNSISA) form the signal peptide. Residues 24–111 (SLQDQHCESL…CQEILSEGEK (88 aa)) lie on the Extracellular side of the membrane. Disulfide bonds link Cys-30–Cys-54, Cys-44–Cys-87, and Cys-68–Cys-102. N-linked (GlcNAc...) asparagine glycosylation is found at Asn-38, Asn-45, Asn-51, Asn-78, Asn-90, and Asn-98. Positions 99–108 (HSECQEILSE) are important for peptide agonist binding. A helical transmembrane segment spans residues 112–142 (SKAHYHIAVIINYLGHCISLAALLVAFVLFL). Over 143–149 (RLRSIRC) the chain is Cytoplasmic. A helical transmembrane segment spans residues 150 to 174 (VRNIIHWNLISAFILRNATWFVVQL). Residues 175–189 (TMSPEVHQSNVGWCR) are Extracellular-facing. A disulfide bridge links Cys-188 with Cys-258. A helical transmembrane segment spans residues 190 to 218 (LVTAAYNYFHVTNFFWMFGEGCYLHTAVV). Residues 219–225 (LTYSTDR) are Cytoplasmic-facing. Residues 226-253 (LRKWMFICIGWGVPFPIIVAWAIGKLYY) traverse the membrane as a helical segment. Residues 254–269 (DNEKCWFGKRPGVYTD) are Extracellular-facing. Residues 270–295 (YIYQGPMILVLLINFIFLFNIVRILM) form a helical membrane-spanning segment. The interval 280–290 (LLINFIFLFNI) is important for antagonist binding. The Cytoplasmic segment spans residues 296–306 (TKLRASTTSET). The residue at position 301 (Ser-301) is a Phosphoserine; by PKA. The chain crosses the membrane as a helical span at residues 307-331 (IQYRKAVKATLVLLPLLGITYMLFF). The Extracellular portion of the chain corresponds to 332–338 (VNPGEDE). A helical membrane pass occupies residues 339–368 (VSRVVFIYFNSFLESFQGFFVSVFYCFLNS). Topologically, residues 369 to 415 (EVRSAIRKRWHRWQDKHSIRARVARAMSIPTSPTRVSFHSIKQSTAV) are cytoplasmic.

Belongs to the G-protein coupled receptor 2 family. As to quaternary structure, heterodimer; heterodimerizes with GPER1. Interacts (via N-terminal extracellular domain) with CRH and UCN. Interacts with DLG1; this inhibits endocytosis of CRHR1 after agonist binding. In terms of processing, C-terminal Ser or Thr residues may be phosphorylated. Phosphorylation at Ser-301 by PKA prevents maximal coupling to Gq-protein, and thereby negatively regulates downstream signaling.

It is found in the cell membrane. It localises to the endosome. Its function is as follows. G-protein coupled receptor for CRH (corticotropin-releasing factor) and UCN (urocortin). Has high affinity for CRH and UCN. Ligand binding causes a conformation change that triggers signaling via guanine nucleotide-binding proteins (G proteins) and down-stream effectors, such as adenylate cyclase. Promotes the activation of adenylate cyclase, leading to increased intracellular cAMP levels. Inhibits the activity of the calcium channel CACNA1H. Required for normal embryonic development of the adrenal gland and for normal hormonal responses to stress. Plays a role in the response to anxiogenic stimuli. This is Corticotropin-releasing factor receptor 1 (CRHR1) from Ovis aries (Sheep).